A 427-amino-acid polypeptide reads, in one-letter code: Trigger factor (427 aa).

Positions 163–248 (GDTVILDFEG…LHEIKTKEVP (86 aa)) constitute a PPIase FKBP-type domain.

This sequence belongs to the FKBP-type PPIase family. Tig subfamily.

Its subcellular location is the cytoplasm. It carries out the reaction [protein]-peptidylproline (omega=180) = [protein]-peptidylproline (omega=0). Functionally, involved in protein export. Acts as a chaperone by maintaining the newly synthesized protein in an open conformation. Functions as a peptidyl-prolyl cis-trans isomerase. The polypeptide is Trigger factor (Listeria monocytogenes serotype 4b (strain CLIP80459)).